Consider the following 365-residue polypeptide: Dehydroprecondylocarpine acetate synthase (365 aa).

Zn(2+) is bound by residues cysteine 105, cysteine 108, cysteine 111, and cysteine 119. N-linked (GlcNAc...) asparagine glycans are attached at residues asparagine 142 and asparagine 147. The NADP(+) site is built by leucine 194, glycine 196, leucine 197, serine 216, threonine 217, threonine 218, lysine 221, leucine 279, alanine 281, serine 303, alanine 305, and arginine 350.

This sequence belongs to the zinc-containing alcohol dehydrogenase family. In terms of assembly, homodimer. Interaction with catharanthine synthase (CS) and tabersonine synthase (TS). Requires Zn(2+) as cofactor.

Its subcellular location is the cytoplasm. The protein localises to the cytosol. It carries out the reaction dihydroprecondylocarpine acetate + NADP(+) = precondylocarpine acetate + NADPH + H(+). It functions in the pathway alkaloid biosynthesis. In terms of biological role, component of the seco-iridoid and derivatives monoterpenoid indole alkaloids (MIAs, e.g. vinblastine, catharanthine, tabersonine, vincadifformine, vindoline, vincristine, quinine and strychnine) biosynthesis pathway. Catalyzes the non-canonical 1,4-reduction of an alpha,beta-unsaturated iminium moiety; by contrast with the classic alcohol dehydrogenase mechanism, this reaction does not require a catalytic zinc or proton relay. Converts precondylocarpine acetate to dihydroprecondylocarpine acetate, that is spontaneously converted into dehydrosecodine intermediate, precursor of angryline. May also trigger the non-stereoselective 1,4-reduction reaction at C15 of dehydrosecodine leading to the production of secodine, a precursor of vincadifformine. The polypeptide is Dehydroprecondylocarpine acetate synthase (Catharanthus roseus (Madagascar periwinkle)).